Consider the following 462-residue polypeptide: N-myc proto-oncogene protein (462 aa).

The segment at 19-47 (LEFDSLQPCFYPDEDDFYFGGPDSTPPGE) is interaction with AURKA. The tract at residues 61-90 (LSPSRAFPEHSPEPSNWATEMLLPEADLWG) is interaction with AURKA and FBXW7. Residues 76 to 85 (NWATEMLLPE) carry the 9aaTAD motif. 3 disordered regions span residues 133-177 (EKLQ…ATLP), 232-290 (AAPA…SNNK), and 332-390 (APSP…LERQ). A compositionally biased stretch (low complexity) spans 138-174 (GHGPPGASSSCPAPGVGASSSGGRALGGSASAGRTGA). The segment covering 257 to 276 (TLSDSDDEDDEEEDEEEEID) has biased composition (acidic residues). 2 positions are modified to phosphoserine; by CK2: serine 259 and serine 261. A bHLH domain is found at 379-431 (ERRRNHNILERQRRNDLRSSFLTLRDHVPELVKNEKAAKVVILKKATEYVHAL). A leucine-zipper region spans residues 431-452 (LQANEHQLLLEKEKLQARQQQL).

As to quaternary structure, efficient DNA binding requires dimerization with another bHLH protein. Binds DNA as a heterodimer with MAX. Interacts with KDM5A, KDM5B and HUWE1. Interacts with MYCNOS. Interacts with AURKA; interaction is phospho-independent and triggers AURKA activation; AURKA competes with FBXW7 for binding to unphosphorylated MYCN but not for binding to unphosphorylated MYCN. Interacts with FBXW7; FBXW7 competes with AURKA for binding to unphosphorylated MYCN but not for binding to phosphorylated MYCN. Post-translationally, phosphorylated by GSK3-beta which may promote its degradation. Phosphorylated by AURKA.

Its subcellular location is the nucleus. Functionally, positively regulates the transcription of MYCNOS in neuroblastoma cells. The sequence is that of N-myc proto-oncogene protein (Mycn) from Rattus norvegicus (Rat).